We begin with the raw amino-acid sequence, 500 residues long: Probable 26S proteasome non-ATPase regulatory subunit 3 (500 aa).

The 180-residue stretch at 253–432 folds into the PCI domain; sequence ARFLYYLGRI…GYMRTKESTD (180 aa). The disordered stretch occupies residues 462 to 484; that stretch reads RYPPKSYGKELESAEERREREQQ. A compositionally biased stretch (basic and acidic residues) spans 468 to 484; sequence YGKELESAEERREREQQ.

The protein belongs to the proteasome subunit S3 family. The 26S proteasome is composed of a core protease, known as the 20S proteasome, capped at one or both ends by the 19S regulatory complex (RC). The RC is composed of at least 18 different subunits in two subcomplexes, the base and the lid, which form the portions proximal and distal to the 20S proteolytic core, respectively.

In terms of biological role, acts as a regulatory subunit of the 26 proteasome which is involved in the ATP-dependent degradation of ubiquitinated proteins. This chain is Probable 26S proteasome non-ATPase regulatory subunit 3 (DOXA2), found in Anopheles stephensi (Indo-Pakistan malaria mosquito).